Reading from the N-terminus, the 460-residue chain is SPbeta prophage-derived uncharacterized protein YopQ (460 aa).

This chain is SPbeta prophage-derived uncharacterized protein YopQ (yopQ), found in Bacillus subtilis (strain 168).